We begin with the raw amino-acid sequence, 419 residues long: Creatine kinase S-type, mitochondrial (419 aa).

Residues 1–39 (MASIFSKLLTGRNASLLFATMGTSVLTTGYLLNRQKVCA) constitute a mitochondrion transit peptide. The interval 40–64 (EVREQPRLFPPSADYPDLRKHNNCM) is cardiolipin-binding. Positions 46 to 132 (RLFPPSADYP…FDPVIKLRHN (87 aa)) constitute a Phosphagen kinase N-terminal domain. Residues 159-401 (YVLSSRVRTG…NYLVDCEKKL (243 aa)) form the Phosphagen kinase C-terminal domain. ATP is bound by residues 162–166 (SSRVR) and H225. Y255 bears the Phosphotyrosine mark. Residues R270, R326, 354-359 (RGTGGV), and D369 each bind ATP. T356 is subject to Phosphothreonine.

It belongs to the ATP:guanido phosphotransferase family. As to quaternary structure, exists as an octamer composed of four CKMT2 homodimers. As to expression, sarcomere-specific. Found only in heart and skeletal muscles.

Its subcellular location is the mitochondrion inner membrane. It carries out the reaction creatine + ATP = N-phosphocreatine + ADP + H(+). Its function is as follows. Reversibly catalyzes the transfer of phosphate between ATP and various phosphogens (e.g. creatine phosphate). Creatine kinase isoenzymes play a central role in energy transduction in tissues with large, fluctuating energy demands, such as skeletal muscle, heart, brain and spermatozoa. The protein is Creatine kinase S-type, mitochondrial (CKMT2) of Homo sapiens (Human).